Consider the following 424-residue polypeptide: MAKIVVTGGQALHGEVHISGAKNAVLPILCATLLADAPVEISNVPHLHDVITTVKLLSELGAEVTIDEGTLAKGRSMLVDPRSVTHQVAPYELVKTMRASILVLGPLLARYGTAEVSLPGGCAIGSRPVDQHIKGLQALGADISVENGYIKATSNGRLKGARYVFDMVSVTGTENVLMAAVLAEGTTVLENAAMEPEVTDLADCLIALGARIEGAGTPRIVVQGVERLGGGHHAVLPDRIETGTFLVAAAMTGGSVTVRRARPETLDAVLDKLTEAGATITTTADSITLDMQGKRPRAVSLTTAPYPAFPTDMQAQFMALNCVADGVGVINETIFENRFMHVNELLRLGADIQVEGHTAIVRGAERLSGAPVMATDLRASASLILAGLVADGDTTIDRIYHLDRGYENIEEKLGALGATIQRTA.

22-23 (KN) contributes to the phosphoenolpyruvate binding site. Position 98 (arginine 98) interacts with UDP-N-acetyl-alpha-D-glucosamine. Cysteine 122 serves as the catalytic Proton donor. Residue cysteine 122 is modified to 2-(S-cysteinyl)pyruvic acid O-phosphothioketal. UDP-N-acetyl-alpha-D-glucosamine-binding positions include 127–131 (RPVDQ), aspartate 312, and isoleucine 334.

It belongs to the EPSP synthase family. MurA subfamily.

The protein resides in the cytoplasm. It catalyses the reaction phosphoenolpyruvate + UDP-N-acetyl-alpha-D-glucosamine = UDP-N-acetyl-3-O-(1-carboxyvinyl)-alpha-D-glucosamine + phosphate. It functions in the pathway cell wall biogenesis; peptidoglycan biosynthesis. Cell wall formation. Adds enolpyruvyl to UDP-N-acetylglucosamine. The chain is UDP-N-acetylglucosamine 1-carboxyvinyltransferase from Xanthomonas axonopodis pv. citri (strain 306).